The primary structure comprises 402 residues: Serine/threonine transporter SstT (402 aa).

8 consecutive transmembrane segments (helical) span residues 17–37 (IAIG…ITVI), 44–64 (FVGG…ANAL), 78–98 (IIVL…ISHY), 138–158 (ALSQ…GFAM), 179–199 (IVRW…FDTI), 212–232 (VLIL…NPII), 295–315 (MAGA…TLGI), and 336–356 (ASGI…LFGI).

This sequence belongs to the dicarboxylate/amino acid:cation symporter (DAACS) (TC 2.A.23) family.

The protein localises to the cell membrane. It catalyses the reaction L-serine(in) + Na(+)(in) = L-serine(out) + Na(+)(out). The enzyme catalyses L-threonine(in) + Na(+)(in) = L-threonine(out) + Na(+)(out). Functionally, involved in the import of serine and threonine into the cell, with the concomitant import of sodium (symport system). This chain is Serine/threonine transporter SstT, found in Streptococcus thermophilus (strain CNRZ 1066).